A 308-amino-acid polypeptide reads, in one-letter code: Aspartate carbamoyltransferase catalytic subunit (308 aa).

Residues arginine 50 and threonine 51 each coordinate carbamoyl phosphate. Lysine 78 contacts L-aspartate. Residues arginine 100, histidine 131, and glutamine 134 each coordinate carbamoyl phosphate. Residues arginine 164 and arginine 216 each contribute to the L-aspartate site. Carbamoyl phosphate contacts are provided by alanine 259 and proline 260.

The protein belongs to the aspartate/ornithine carbamoyltransferase superfamily. ATCase family. Heterododecamer (2C3:3R2) of six catalytic PyrB chains organized as two trimers (C3), and six regulatory PyrI chains organized as three dimers (R2).

It catalyses the reaction carbamoyl phosphate + L-aspartate = N-carbamoyl-L-aspartate + phosphate + H(+). It functions in the pathway pyrimidine metabolism; UMP biosynthesis via de novo pathway; (S)-dihydroorotate from bicarbonate: step 2/3. Catalyzes the condensation of carbamoyl phosphate and aspartate to form carbamoyl aspartate and inorganic phosphate, the committed step in the de novo pyrimidine nucleotide biosynthesis pathway. The chain is Aspartate carbamoyltransferase catalytic subunit from Oenococcus oeni (strain ATCC BAA-331 / PSU-1).